The sequence spans 356 residues: 5-formaminoimidazole-4-carboxamide-1-(beta)-D-ribofuranosyl 5'-monophosphate synthetase 2 (356 aa).

Residues H27 and S94 each contribute to the 5-amino-1-(5-phospho-beta-D-ribosyl)imidazole-4-carboxamide site. The ATP-grasp domain occupies 101–333 (RENFTGMAVP…YSDLMQKRLS (233 aa)). ATP is bound by residues 145–196 (PHDI…TRYD) and E226. 5-amino-1-(5-phospho-beta-D-ribosyl)imidazole-4-carboxamide is bound at residue N255. The Mg(2+) site is built by E293 and E306.

The protein belongs to the phosphohexose mutase family. Requires Mg(2+) as cofactor. Mn(2+) is required as a cofactor.

The enzyme catalyses 5-amino-1-(5-phospho-beta-D-ribosyl)imidazole-4-carboxamide + formate + ATP = 5-formamido-1-(5-phospho-D-ribosyl)imidazole-4-carboxamide + ADP + phosphate. It participates in purine metabolism; IMP biosynthesis via de novo pathway; 5-formamido-1-(5-phospho-D-ribosyl)imidazole-4-carboxamide from 5-amino-1-(5-phospho-D-ribosyl)imidazole-4-carboxamide (formate route): step 1/1. Catalyzes the ATP- and formate-dependent formylation of 5-aminoimidazole-4-carboxamide-1-beta-d-ribofuranosyl 5'-monophosphate (AICAR) to 5-formaminoimidazole-4-carboxamide-1-beta-d-ribofuranosyl 5'-monophosphate (FAICAR) in the absence of folates. The sequence is that of 5-formaminoimidazole-4-carboxamide-1-(beta)-D-ribofuranosyl 5'-monophosphate synthetase 2 from Methanosarcina mazei (strain ATCC BAA-159 / DSM 3647 / Goe1 / Go1 / JCM 11833 / OCM 88) (Methanosarcina frisia).